The sequence spans 116 residues: Putative iron-sulfur cluster insertion protein ErpA (116 aa).

Iron-sulfur cluster contacts are provided by cysteine 44, cysteine 108, and cysteine 110.

It belongs to the HesB/IscA family. In terms of assembly, homodimer. Iron-sulfur cluster serves as cofactor.

Its function is as follows. Required for insertion of 4Fe-4S clusters. This Thiobacillus denitrificans (strain ATCC 25259 / T1) protein is Putative iron-sulfur cluster insertion protein ErpA.